Consider the following 1233-residue polypeptide: Glutamate receptor ionotropic, NMDA 2C (1233 aa).

Residues 1-19 (MGGALGPALLLTSLFGAWA) form the signal peptide. The Extracellular portion of the chain corresponds to 20 to 554 (GLGPGQGEQG…SAFLEPYSPA (535 aa)). Residues N70 and N73 are each glycosylated (N-linked (GlcNAc...) asparagine). C82 and C317 are disulfide-bonded. N-linked (GlcNAc...) asparagine glycosylation is found at N337 and N438. 2 disulfides stabilise this stretch: C426–C453 and C433–C454. L-glutamate contacts are provided by S509, T511, and R516. The N-linked (GlcNAc...) asparagine glycan is linked to N539. The helical transmembrane segment at 555–575 (VWVMMFVMCLTVVAITVFMFE) threads the bilayer. Over 576 to 598 (YFSPVSYNQNLTRGKKSGGPAFT) the chain is Cytoplasmic. The discontinuously helical intramembrane region spans 599 to 611 (IGKSVWLLWALVF). Residues 601 to 620 (KSVWLLWALVFNNSVPIENP) are pore-forming. The Cytoplasmic portion of the chain corresponds to 612 to 626 (NNSVPIENPRGTTSK). Residues 627–644 (IMVLVWAFFAVIFLASYT) form a helical membrane-spanning segment. Residues 645 to 813 (ANLAAFMIQE…EVMSSKLDID (169 aa)) lie on the Extracellular side of the membrane. A glycan (N-linked (GlcNAc...) asparagine) is linked at N685. The L-glutamate site is built by S687, T688, and D729. A disulfide bridge links C743 with C798. The chain crosses the membrane as a helical span at residues 814–836 (NMAGVFYMLLVAMGLALLVFAWE). The Cytoplasmic segment spans residues 837–1233 (HLVYWKLRHS…RRISSLESEV (397 aa)). Residues S875, S881, and S912 each carry the phosphoserine modification. Residues 920–994 (IENWGGGRRA…GPPLSDVSRV (75 aa)) are disordered. Composition is skewed to pro residues over residues 929–956 (APPP…PEPS) and 975–987 (PQPP…PGPP). The PDZ-binding motif lies at 1231 to 1233 (SEV).

This sequence belongs to the glutamate-gated ion channel (TC 1.A.10.1) family. NR2C/GRIN2C subfamily. In terms of assembly, heterotetramer. Forms heterotetrameric channels composed of two GluN1/zeta subunits (GRIN1), and two identical GluN2/epsilon subunits (GRIN2A, GRIN2B, GRIN2C or GRIN2D) or GluN3 subunits (GRIN3A or GRIN3B) (in vitro). In vivo, the subunit composition may depend on the expression levels of the different subunits. Interacts with PDZ domains of PATJ and DLG4. Interacts (via PDZ-binding motif) with SNX27 (via PDZ domain); the interaction is required for recycling to the plasma membrane when endocytosed and prevent degradation in lysosomes. Mainly expressed in brain with predominant expression is in the cerebellum, also present in the hippocampus, amygdala, caudate nucleus, corpus callosum, subthalamic nuclei and thalamus. Detected in the heart, skeletal muscle and pancreas.

The protein localises to the cell membrane. Its subcellular location is the postsynaptic cell membrane. It catalyses the reaction Ca(2+)(in) = Ca(2+)(out). The enzyme catalyses Na(+)(in) = Na(+)(out). It carries out the reaction K(+)(in) = K(+)(out). Functionally, component of N-methyl-D-aspartate (NMDA) receptors (NMDARs) that function as heterotetrameric, ligand-gated cation channels with high calcium permeability and voltage-dependent block by Mg(2+). Participates in synaptic plasticity for learning and memory formation by contributing to the slow phase of excitatory postsynaptic current and long-term synaptic potentiation. Channel activation requires binding of the neurotransmitter L-glutamate to the GluN2 subunit, glycine or D-serine binding to the GluN1 subunit, plus membrane depolarization to eliminate channel inhibition by Mg(2+). NMDARs mediate simultaneously the potasium efflux and the influx of calcium and sodium. Each GluN2 subunit confers differential attributes to channel properties, including activation, deactivation and desensitization kinetics, pH sensitivity, Ca2(+) permeability, and binding to allosteric modulators. This Homo sapiens (Human) protein is Glutamate receptor ionotropic, NMDA 2C.